The primary structure comprises 117 residues: Large ribosomal subunit protein eL8 (117 aa).

The protein belongs to the eukaryotic ribosomal protein eL8 family. In terms of assembly, part of the 50S ribosomal subunit. Part of the RNase P complex.

The protein resides in the cytoplasm. The enzyme catalyses Endonucleolytic cleavage of RNA, removing 5'-extranucleotides from tRNA precursor.. Its function is as follows. Multifunctional RNA-binding protein that recognizes the K-turn motif in ribosomal RNA, the RNA component of RNase P, box H/ACA, box C/D and box C'/D' sRNAs. Part of ribonuclease P, a protein complex that generates mature tRNA molecules by cleaving their 5'-ends, this subunit dramatically stimulates RNase P activity. This chain is Large ribosomal subunit protein eL8, found in Methanococcus maripaludis (strain DSM 14266 / JCM 13030 / NBRC 101832 / S2 / LL).